A 329-amino-acid polypeptide reads, in one-letter code: Phosphate acyltransferase (329 aa).

It belongs to the PlsX family. As to quaternary structure, homodimer. Probably interacts with PlsY.

The protein resides in the cytoplasm. It catalyses the reaction a fatty acyl-[ACP] + phosphate = an acyl phosphate + holo-[ACP]. Its pathway is lipid metabolism; phospholipid metabolism. In terms of biological role, catalyzes the reversible formation of acyl-phosphate (acyl-PO(4)) from acyl-[acyl-carrier-protein] (acyl-ACP). This enzyme utilizes acyl-ACP as fatty acyl donor, but not acyl-CoA. The protein is Phosphate acyltransferase of Sulfurovum sp. (strain NBC37-1).